Reading from the N-terminus, the 127-residue chain is DNA-directed RNA polymerases I, II, and III subunit RPABC2 (127 aa).

Residues 1 to 34 (MSDNEDNFDGDDFDDVEEDEGLDDLENAEEEGQE) show a composition bias toward acidic residues. Residues 1 to 53 (MSDNEDNFDGDDFDDVEEDEGLDDLENAEEEGQENVEILPSGERPQANQKRIT) form a disordered region. S2 carries the N-acetylserine modification. A Phosphoserine; by CK2 modification is found at S2.

Belongs to the archaeal Rpo6/eukaryotic RPB6 RNA polymerase subunit family. Component of the RNA polymerase I (Pol I), RNA polymerase II (Pol II) and RNA polymerase III (Pol III) complexes consisting of at least 13, 12 and 17 subunits, respectively. Pol I complex consists of a ten-subunit catalytic core composed of POLR1A/RPA1, POLR1B/RPA2, POLR1C/RPAC1, POLR1D/RPAC2, POLR1H/RPA12, POLR2E/RPABC1, POLR2F/RPABC2, POLR2H/RPABC3, POLR2K/RPABC4 and POLR2L/RPABC5; a mobile stalk subunit POLR1F/RPA43 protruding from the core and additional subunits homologous to general transcription factors POLR1E/RPA49 and POLR1G/RPA34. Part of Pol I pre-initiation complex (PIC), in which Pol I core assembles with RRN3 and promoter-bound UTBF and SL1/TIF-IB complex. Pol II complex contains a ten-subunit catalytic core composed of POLR2A/RPB1, POLR2B/RPB2, POLR2C/RPB3, POLR2I/RPB9, POLR2J/RPB11, POLR2E/RPABC1, POLR2F/RPABC2, POLR2H/RPABC3, POLR2K/RPABC4 and POLR2L/RPABC5 and a mobile stalk composed of two subunits POLR2D/RPB4 and POLR2G/RPB7. Part of Pol II(G) complex, in which Pol II core associates with an additional subunit POLR2M; unlike conventional Pol II, Pol II(G) functions as a transcriptional repressor. Part of TBP-based Pol II pre-initiation complex (PIC), in which Pol II core assembles with general transcription factors and other specific initiation factors including GTF2E1, GTF2E2, GTF2F1, GTF2F2, TCEA1, ERCC2, ERCC3, GTF2H2, GTF2H3, GTF2H4, GTF2H5, GTF2A1, GTF2A2, GTF2B and TBP; this large multi-subunit PIC complex mediates DNA unwinding and targets Pol II core to the transcription start site where the first phosphodiester bond forms. Pol III complex consists of a ten-subunit catalytic core composed of POLR3A/RPC1, POLR3B/RPC2, POLR1C/RPAC1, POLR1D/RPAC2, POLR3K/RPC10, POLR2E/RPABC1, POLR2F/RPABC2, POLR2H/RPABC3, POLR2K/RPABC4 and POLR2L/RPABC5; a mobile stalk composed of two subunits POLR3H/RPC8 and CRCP/RPC9, protruding from the core and functioning primarily in transcription initiation; and additional subunits homologous to general transcription factors of the RNA polymerase II machinery, POLR3C/RPC3-POLR3F/RPC6-POLR3G/RPC7 heterotrimer required for transcription initiation and POLR3D/RPC4-POLR3E/RPC5 heterodimer involved in both transcription initiation and termination.

Its subcellular location is the nucleus. The protein resides in the nucleolus. DNA-dependent RNA polymerase catalyzes the transcription of DNA into RNA using the four ribonucleoside triphosphates as substrates. Common component of RNA polymerases I, II, and III which synthesize ribosomal RNA precursors, mRNA precursors and many functional non-coding RNAs, and small RNAs, such as 5S rRNA and tRNAs, respectively. Pol II is the central component of the basal RNA polymerase II transcription machinery. Pols are composed of mobile elements that move relative to each other. In Pol II, POLR2F/RPABC2 is part of the clamp element and together with parts of POLR2A/RPB1 and POLR2B/RPB2 forms a pocket to which the POLR2D/RPB4-POLR2G/RPB7 subcomplex binds. The sequence is that of DNA-directed RNA polymerases I, II, and III subunit RPABC2 from Mus musculus (Mouse).